A 321-amino-acid polypeptide reads, in one-letter code: Putative pyridoxal kinase (321 aa).

Residues serine 23 and tyrosine 144 each contribute to the substrate site. Residues 203-204 and 230-242 contribute to the ATP site; these read TS and TFPRLVGQFVGTG. Aspartate 243 is a binding site for substrate.

Belongs to the pyridoxine kinase family. Zn(2+) serves as cofactor. Requires Mg(2+) as cofactor.

The catalysed reaction is pyridoxal + ATP = pyridoxal 5'-phosphate + ADP + H(+). In terms of biological role, required for synthesis of pyridoxal-5-phosphate from vitamin B6. This chain is Putative pyridoxal kinase, found in Caenorhabditis elegans.